A 6885-amino-acid polypeptide reads, in one-letter code: Nesprin-2 (6885 aa).

The tract at residues 1 to 286 (MASSPELPTE…YVAQFLQYSK (286 aa)) is actin-binding. The Cytoplasmic portion of the chain corresponds to 1–6834 (MASSPELPTE…QRSFLSRVVR (6834 aa)). 2 Calponin-homology (CH) domains span residues 31 to 136 (DTQK…LHFH) and 181 to 286 (MSAR…QYSK). 7 Spectrin repeats span residues 297-378 (GKVK…HQIN), 379-472 (AWKI…RINN), 473-575 (ILEK…KNIY), 576-680 (NVKS…KQDQ), 735-838 (VAKD…KNLT), 839-932 (DVSP…LHHE), and 933-1034 (LSLY…KCAS). Residues 297–6782 (GKVKDAMGWL…PASPLPSFDE (6486 aa)) adopt a coiled-coil conformation. Ser841 carries the post-translational modification Phosphoserine. Residue Lys955 is modified to N6-acetyllysine. The span at 1042–1059 (PTAGGTSKNEGTITTSEN) shows a compositional bias: polar residues. A disordered region spans residues 1042 to 1084 (PTAGGTSKNEGTITTSENRGGDPHSEAPFAKSDNQPSTEKAME). 12 Spectrin repeats span residues 1121 to 1212 (TYRD…TLNT), 1263 to 1323 (NIQD…DTLK), 1324 to 1419 (ALED…YGVQ), 1420 to 1524 (EEFT…ALVT), 1525 to 1636 (ECLE…KTED), 1637 to 1738 (YYEN…TGES), 1739 to 1830 (NCHA…TKKS), 1831 to 1938 (VLQD…AKEL), 1939 to 2036 (EDSL…EEED), 2037 to 2132 (KLLP…LAST), 2133 to 2243 (YLSH…SVQN), and 2244 to 2360 (LDGH…LNSI). Basic and acidic residues predominate over residues 2368-2382 (EKKGKFTLPGREKQA). The disordered stretch occupies residues 2368–2394 (EKKGKFTLPGREKQATSDVQESTQESA). Over residues 2383–2393 (TSDVQESTQES) the composition is skewed to polar residues. Spectrin repeat units lie at residues 2432–2513 (DERK…TLKK), 2514–2620 (NKES…KYSQ), 2621–2717 (QVVE…ETLE), 2718–2831 (PLHL…QLEF), 2832–2933 (KLEE…FIQN), 2934–3036 (TCNE…EKIK), 3037–3142 (QLDT…NMVL), 3143–3248 (ELSP…DLRT), 3249–3352 (NVLN…AQET), 3353–3465 (EAER…MWCE), 3466–3573 (ELKQ…KVQK), 3574–3679 (NKEL…SNEV), 3680–3777 (LKSS…ECRT), 3778–3880 (SQLN…KIME), 3881–3986 (SLPQ…VTQE), and 3987–4086 (QNEL…LPAV). Ser2781 carries the phosphoserine modification. Composition is skewed to basic and acidic residues over residues 4073–4083 (QEQEGVERDRL) and 4093–4102 (VAERDASERK). Disordered regions lie at residues 4073 to 4162 (QEQE…SGTI), 4184 to 4232 (DSLN…KTRP), 4335 to 4363 (EKHSEDQHPTILKKSSEPEHQEALQPVNL), and 4416 to 4448 (HDNDTTQESSASNQASSPENDVPDSILSPQGQN). The residue at position 4108 (Ser4108) is a Phosphoserine. 2 stretches are compositionally biased toward basic and acidic residues: residues 4122 to 4134 (SSVKSDNGDEKAE) and 4144 to 4155 (WKHDKDMEEDRA). The stretch at 4229–4348 (KTRPEPTEVL…EDQHPTILKK (120 aa)) is one Spectrin 36 repeat. The span at 4335–4356 (EKHSEDQHPTILKKSSEPEHQE) shows a compositional bias: basic and acidic residues. The span at 4421-4434 (TQESSASNQASSPE) shows a compositional bias: polar residues. Spectrin repeat units lie at residues 4520–4639 (NMTE…RSYQ), 4640–4727 (NEIK…RARY), 4728–4837 (TELS…QSLL), 4838–4943 (QKWE…QALL), 4944–5051 (KHLL…QEKL), 5052–5164 (HQLQ…KIQH), 5165–5266 (LEQL…TQVN), 5267–5391 (QLKT…KAYS), 5392–5487 (NAHG…MLLV), 5488–5589 (KANE…CSEL), 5590–5704 (QGIG…QWQD), 5705–5799 (FTTS…PQLA), 5800–5907 (EMIK…RVAI), 5908–6017 (RKQE…VKKL), 6018–6135 (KETF…EETW), 6136–6243 (RLWQ…LRHF), and 6244–6355 (TNQR…PGLE). Ser5785 carries the post-translational modification Phosphoserine. Residues 6354–6367 (LEDEKEASENETDM) are compositionally biased toward acidic residues. Positions 6354 to 6508 (LEDEKEASEN…GTDGGKEGPR (155 aa)) are disordered. 7 positions are modified to phosphoserine: Ser6361, Ser6384, Ser6411, Ser6428, Ser6429, Ser6430, and Ser6459. Residues 6368 to 6384 (EDPREIQTDSWRKRGES) are compositionally biased toward basic and acidic residues. 3 Spectrin repeats span residues 6461 to 6549 (SCPE…KLKI), 6550 to 6665 (KQNL…QCQD), and 6666 to 6782 (FHQL…SFDE). Over residues 6463–6474 (PEHHYKQMEGDR) the composition is skewed to basic and acidic residues. The segment covering 6477–6489 (PPVPPASSTPYKP) has biased composition (pro residues). Over residues 6490-6499 (PYGKLLLPPG) the composition is skewed to low complexity. Residues 6769-6824 (GTQNPASPLPSFDEVDSGDQPPATSVPAPRAKQFRAVRTTEGEEETESRVPGSTRP) form a disordered region. Positions 6826–6885 (RSFLSRVVRAALPLQLLLLLLLLLACLLPSSEEDYSCTQANNFARSFYPMLRYTNGPPPT) constitute a KASH domain. Residues 6835-6855 (AALPLQLLLLLLLLLACLLPS) form a helical; Anchor for type IV membrane protein membrane-spanning segment. Topologically, residues 6856-6885 (SEEDYSCTQANNFARSFYPMLRYTNGPPPT) are perinuclear space. The tract at residues 6872 to 6885 (FYPMLRYTNGPPPT) is sufficient for interaction with SUN2.

This sequence belongs to the nesprin family. As to quaternary structure, core component of LINC complexes which are composed of inner nuclear membrane SUN domain-containing proteins coupled to outer nuclear membrane KASH domain-containing nesprins. SUN and KASH domain-containing proteins seem to bind each other promiscuously; however, some LINC complex constituents are tissue- or cell type-specific. At least SUN1/2-containing core LINC complexes are proposed to be hexameric composed of three protomers of each KASH and SUN domain-containing protein. The SUN2:SYNE2/KASH2 complex is a heterohexamer; the homotrimeric cloverleave-like conformation of the SUN domain is a prerequisite for LINC complex formation in which three separate SYNE2/KASH2 peptides bind at the interface of adjacent SUN domains. Interacts with EMD, LMNA, MKS3 and F-actin via its N-terminal domain. Interacts with DCTN1 and DYNC1I1/2; suggesting the association with the dynein-dynactin motor complex. Associates with kinesin motor complexes. Interacts with TMEM67. Interacts (via KASH domain) with TMEM258. Interacts with BROX; this interaction promotes SYN2 ubiquitination and facilitates the relaxation of mechanical stress imposed by compressive actin fibers at the rupture site. Post-translationally, the disulfid bond with SUN2 is required for stability of the SUN2:SYNE2/KASH2 LINC complex under tensile forces though not required for the interaction. Ubiquitinated, targeting it for degradation. In terms of tissue distribution, widely expressed, with higher level in kidney, adult and fetal liver, stomach and placenta. Weakly expressed in skeletal muscle and brain. Isoform 5 is highly expressed in pancreas, skeletal muscle and heart.

The protein localises to the nucleus outer membrane. Its subcellular location is the sarcoplasmic reticulum membrane. The protein resides in the cell membrane. It is found in the cytoplasm. It localises to the cytoskeleton. The protein localises to the mitochondrion. Its subcellular location is the nucleus. The protein resides in the nucleoplasm. It is found in the myofibril. It localises to the sarcomere. The protein localises to the z line. Its subcellular location is the cell junction. The protein resides in the focal adhesion. Its function is as follows. Multi-isomeric modular protein which forms a linking network between organelles and the actin cytoskeleton to maintain the subcellular spatial organization. As a component of the LINC (LInker of Nucleoskeleton and Cytoskeleton) complex involved in the connection between the nuclear lamina and the cytoskeleton. The nucleocytoplasmic interactions established by the LINC complex play an important role in the transmission of mechanical forces across the nuclear envelope and in nuclear movement and positioning. Specifically, SYNE2 and SUN2 assemble in arrays of transmembrane actin-associated nuclear (TAN) lines which are bound to F-actin cables and couple the nucleus to retrograde actin flow during actin-dependent nuclear movement. May be involved in nucleus-centrosome attachment. During interkinetic nuclear migration (INM) at G2 phase and nuclear migration in neural progenitors its LINC complex association with SUN1/2 and probable association with cytoplasmic dynein-dynactin motor complexes functions to pull the nucleus toward the centrosome; SYNE1 and SYNE2 may act redundantly. During INM at G1 phase mediates respective LINC complex association with kinesin to push the nucleus away from the centrosome. Involved in nuclear migration in retinal photoreceptor progenitors. Required for centrosome migration to the apical cell surface during early ciliogenesis. Facilitates the relaxation of mechanical stress imposed by compressive actin fibers at the rupture site through its nteraction with SYN2. The sequence is that of Nesprin-2 from Homo sapiens (Human).